We begin with the raw amino-acid sequence, 425 residues long: Glutamyl-tRNA reductase (425 aa).

Substrate is bound by residues 49–52 (TCNR), Ser-109, 114–116 (EGQ), and Gln-120. Cys-50 acts as the Nucleophile in catalysis. 189-194 (GAGETG) lines the NADP(+) pocket.

Belongs to the glutamyl-tRNA reductase family. As to quaternary structure, homodimer.

The catalysed reaction is (S)-4-amino-5-oxopentanoate + tRNA(Glu) + NADP(+) = L-glutamyl-tRNA(Glu) + NADPH + H(+). Its pathway is porphyrin-containing compound metabolism; protoporphyrin-IX biosynthesis; 5-aminolevulinate from L-glutamyl-tRNA(Glu): step 1/2. It participates in porphyrin-containing compound metabolism; chlorophyll biosynthesis. In terms of biological role, catalyzes the NADPH-dependent reduction of glutamyl-tRNA(Glu) to glutamate 1-semialdehyde (GSA). The sequence is that of Glutamyl-tRNA reductase from Chlorobium phaeobacteroides (strain DSM 266 / SMG 266 / 2430).